The following is a 317-amino-acid chain: NAC domain-containing protein 19 (317 aa).

An NAC domain is found at 14–162; that stretch reads LPPGFRFYPT…DWVLCRIYKK (149 aa).

Dimer. Interacts with RHA2A, RHA2B or RHG1A, but not with RHA3A or RHA3B. In terms of tissue distribution, expressed in stems, flowers, cauline leaves and rosettes.

It is found in the nucleus. Its function is as follows. Transcription factors that bind specifically to the 5'-CATGTG-3' motif. This is NAC domain-containing protein 19 (NAC019) from Arabidopsis thaliana (Mouse-ear cress).